The sequence spans 529 residues: Glutamyl-tRNA reductase (529 aa).

47–50 (TCNR) provides a ligand contact to substrate. The Nucleophile role is filled by C48. The disordered stretch occupies residues 56–80 (SPRQQAPAPPRPGSAPPPSDEELSR). The span at 62 to 73 (PAPPRPGSAPPP) shows a compositional bias: pro residues. Residues S125, 130-132 (EPQ), and Q136 each bind substrate. NADP(+) is bound at residue 205-210 (GAGDMA). The segment at 454 to 505 (RGAVDGPPTPRSARGAAPPASGARGGGSPRHADPRPQAAEDNGVYARQPGGR) is disordered. Residues 464-475 (RSARGAAPPASG) are compositionally biased toward low complexity.

It belongs to the glutamyl-tRNA reductase family. As to quaternary structure, homodimer.

It catalyses the reaction (S)-4-amino-5-oxopentanoate + tRNA(Glu) + NADP(+) = L-glutamyl-tRNA(Glu) + NADPH + H(+). The protein operates within porphyrin-containing compound metabolism; protoporphyrin-IX biosynthesis; 5-aminolevulinate from L-glutamyl-tRNA(Glu): step 1/2. Its function is as follows. Catalyzes the NADPH-dependent reduction of glutamyl-tRNA(Glu) to glutamate 1-semialdehyde (GSA). This is Glutamyl-tRNA reductase from Sorangium cellulosum (strain So ce56) (Polyangium cellulosum (strain So ce56)).